The primary structure comprises 365 residues: Histidinol-phosphate aminotransferase (365 aa).

The disordered stretch occupies residues 1-22; the sequence is MSRPVPNPGILDIAPYTPGKSP. Residue K221 is modified to N6-(pyridoxal phosphate)lysine.

The protein belongs to the class-II pyridoxal-phosphate-dependent aminotransferase family. Histidinol-phosphate aminotransferase subfamily. Homodimer. The cofactor is pyridoxal 5'-phosphate.

It catalyses the reaction L-histidinol phosphate + 2-oxoglutarate = 3-(imidazol-4-yl)-2-oxopropyl phosphate + L-glutamate. The protein operates within amino-acid biosynthesis; L-histidine biosynthesis; L-histidine from 5-phospho-alpha-D-ribose 1-diphosphate: step 7/9. In Rhodopseudomonas palustris (strain BisB5), this protein is Histidinol-phosphate aminotransferase.